The following is a 569-amino-acid chain: Urease subunit alpha (569 aa).

Residues 132–569 (GGIDSHIHFI…LPLAQRYFLF (438 aa)) enclose the Urease domain. His-137, His-139, and Lys-220 together coordinate Ni(2+). Lys-220 carries the N6-carboxylysine modification. Residue His-222 coordinates substrate. Residues His-249 and His-275 each coordinate Ni(2+). Catalysis depends on His-323, which acts as the Proton donor. Residue Asp-363 participates in Ni(2+) binding.

This sequence belongs to the metallo-dependent hydrolases superfamily. Urease alpha subunit family. In terms of assembly, heterotrimer of UreA (gamma), UreB (beta) and UreC (alpha) subunits. Three heterotrimers associate to form the active enzyme. Requires Ni cation as cofactor. Post-translationally, carboxylation allows a single lysine to coordinate two nickel ions.

It is found in the cytoplasm. The enzyme catalyses urea + 2 H2O + H(+) = hydrogencarbonate + 2 NH4(+). It participates in nitrogen metabolism; urea degradation; CO(2) and NH(3) from urea (urease route): step 1/1. The polypeptide is Urease subunit alpha (Dechloromonas aromatica (strain RCB)).